The primary structure comprises 663 residues: UvrABC system protein B (663 aa).

The 388-residue stretch at 31 to 418 (DNIEGGEKAQ…TDTVVEQIIR (388 aa)) folds into the Helicase ATP-binding domain. An ATP-binding site is contributed by 44–51 (GATGTGKT). A Beta-hairpin motif is present at residues 97 to 120 (YYDYYQPEAYVPSSDTYIEKDSSV). The region spanning 435 to 601 (QMDDLLGEIN…TIKKEIRDLI (167 aa)) is the Helicase C-terminal domain. Positions 627 to 662 (QAEIKALQKQMQEAAELLDFELAAQIRDVILKLKAI) constitute a UVR domain.

This sequence belongs to the UvrB family. As to quaternary structure, forms a heterotetramer with UvrA during the search for lesions. Interacts with UvrC in an incision complex.

Its subcellular location is the cytoplasm. Its function is as follows. The UvrABC repair system catalyzes the recognition and processing of DNA lesions. A damage recognition complex composed of 2 UvrA and 2 UvrB subunits scans DNA for abnormalities. Upon binding of the UvrA(2)B(2) complex to a putative damaged site, the DNA wraps around one UvrB monomer. DNA wrap is dependent on ATP binding by UvrB and probably causes local melting of the DNA helix, facilitating insertion of UvrB beta-hairpin between the DNA strands. Then UvrB probes one DNA strand for the presence of a lesion. If a lesion is found the UvrA subunits dissociate and the UvrB-DNA preincision complex is formed. This complex is subsequently bound by UvrC and the second UvrB is released. If no lesion is found, the DNA wraps around the other UvrB subunit that will check the other stand for damage. The protein is UvrABC system protein B of Streptococcus agalactiae serotype Ia (strain ATCC 27591 / A909 / CDC SS700).